The chain runs to 633 residues: Pescadillo homolog (633 aa).

A BRCT domain is found at 321–414 (RLRTLFKGLK…QLLPTNKYFL (94 aa)). 2 disordered regions span residues 450–470 (HAQS…DTVE) and 490–567 (KKYG…LQAR). 2 positions are modified to phosphoserine: Ser453 and Ser457. Composition is skewed to acidic residues over residues 454–470 (EDES…DTVE) and 498–526 (VNED…EELD). A compositionally biased stretch (basic and acidic residues) spans 527–538 (EKEKRLLEEKQK). A compositionally biased stretch (basic residues) spans 545-554 (KVHKVNKRQV). Basic and acidic residues predominate over residues 555–564 (HKAEVDEHRL). Positions 593-626 (LLRKKRRTIETDAKEAKKLAKREARKAAAAAAAA) form a coiled coil.

It belongs to the pescadillo family.

It is found in the nucleus. It localises to the nucleolus. The protein localises to the nucleoplasm. In terms of biological role, required for maturation of ribosomal RNAs and formation of the large ribosomal subunit. This is Pescadillo homolog from Drosophila virilis (Fruit fly).